A 601-amino-acid polypeptide reads, in one-letter code: MTVRLSEGAIESLSKGTEVNNPILQCVNIRKIDGGNGVSRFRVMMSDGLHTMSSFMLSTQLNPMAEQNQLATNCVCVLKRSVTNVLKDGRRVVVILDIEVLKSADQMPGKIGDPTPYVEGQSKAPSTAPAPTARPLQPQNGSDGSTYRPSAQSFGKKPMAAPNTPGGSSKVVPIASLNPYQSKWTIRARVTNKSAIRTWSNSRGDGKLFSMELVDESGEIRATGFNNEVDKFFSLIEQGKVFYISKGTLKIANKQFSSLKNDYEMTLNGETSIIPCEDSNDVPMLQCDFVSIADLESREKDTILDVIGVCKNAEDVARIMTKNSREVSKRNIQLIDMSGRVIQLTMWGSDAETFDGSGQPILAIKGARLSDFGGRSLSTLYSSTVMINPDIPEAYKLRGWYDKEGHALDGQSMTELRGPGGGGNTNWKTLAEVKNEHLGHGDKADYFSCIATIVYIRKENCLYQACPSKDCNKKVVDQQNGMFRCEKCDKEFPDFKYRLMLSANIADFGDNQWVTCFQDTAETLLGQNSSYLGQLKDTNEAAFDEVFQHANFNTFVFRNRVKLETYNDESRIKVTVVDAKPVDHREYSKRLIINIRKLAAQ.

Residues Met107 to Val172 form a disordered region. Residues Ala124–Pro135 are compositionally biased toward low complexity. Residues Gln137–Ser153 show a composition bias toward polar residues. The OB DNA-binding region spans Trp184–Asn268. A Phosphoserine modification is found at Ser370. The segment at Cys466–Cys488 adopts a C4-type zinc-finger fold.

It belongs to the replication factor A protein 1 family. In terms of assembly, component of the heterotrimeric canonical replication protein A complex (RPA).

It is found in the nucleus. Its subcellular location is the PML body. As part of the heterotrimeric replication protein A complex (RPA/RP-A), binds and stabilizes single-stranded DNA intermediates, that form during DNA replication or upon DNA stress. It prevents their reannealing and in parallel, recruits and activates different proteins and complexes involved in DNA metabolism. Thereby, it plays an essential role both in DNA replication and the cellular response to DNA damage. The polypeptide is Replication protein A 70 kDa DNA-binding subunit (rpa1) (Danio rerio (Zebrafish)).